The following is a 310-amino-acid chain: MYAYSHKNILDTLQFSKDDLNYLITKTNRMNALHESGKAFGILHGKLLASLFFEASTRTRMSFEAAMERLGGRLISTVGFQFSSISKGETLYDTMKMIEAYCDIAVIRHPVEGSSRIAAGAVNIPVINAGDGAGQHPTQALLDLYTIVSEKGKIDGLNIAFIGDLKYGRTIHSLINLLRHYPVHLYLISPEELRLPEKYKKNLEGFPMTWEETTDIKAIWDADVAYVTRIQEERFPDHREYEKLKDIYKVNKELVLASKKDTTILHPLPRVNELSTDVDDLPNAAYFRQAKYGVVVRMALLCLSLGVNFD.

Residues R58 and T59 each contribute to the carbamoyl phosphate site. Residue K87 coordinates L-aspartate. Positions 108, 136, and 139 each coordinate carbamoyl phosphate. L-aspartate contacts are provided by R169 and R229. Residues L268 and P269 each contribute to the carbamoyl phosphate site.

Belongs to the aspartate/ornithine carbamoyltransferase superfamily. ATCase family. As to quaternary structure, heterododecamer (2C3:3R2) of six catalytic PyrB chains organized as two trimers (C3), and six regulatory PyrI chains organized as three dimers (R2).

It carries out the reaction carbamoyl phosphate + L-aspartate = N-carbamoyl-L-aspartate + phosphate + H(+). It functions in the pathway pyrimidine metabolism; UMP biosynthesis via de novo pathway; (S)-dihydroorotate from bicarbonate: step 2/3. In terms of biological role, catalyzes the condensation of carbamoyl phosphate and aspartate to form carbamoyl aspartate and inorganic phosphate, the committed step in the de novo pyrimidine nucleotide biosynthesis pathway. The protein is Aspartate carbamoyltransferase catalytic subunit of Leptospira biflexa serovar Patoc (strain Patoc 1 / Ames).